The following is a 188-amino-acid chain: CyanoP (188 aa).

The N-terminal stretch at 1-23 (MLKKSLSTAVVLVTLLLSFTLTA) is a signal peptide. Cys-24 carries the N-palmitoyl cysteine lipid modification. Cys-24 is lipidated: S-diacylglycerol cysteine.

It belongs to the PsbP family. CyanoP subfamily. Monomer. Present in about 3% of photosystem II (PSII) preparations. Purifies with partially assembled PSII complexes, in addition to a small amount of monomeric and dimeric PSII, and trimeric PSI.

It localises to the cellular thylakoid membrane. Plays a role in the early stages of photosystem II (PSII) assembly; binds to D2 (psbD) and may facilitate its incorporation into PSII. Required for optimal photoautotrophic growth in the absence of Ca(2+) or Cl(-), functions in optimizing PSII water oxidation/O(2) evolving activity. Might be involved in assembly of the oxygen evolving complex. The sequence is that of CyanoP from Synechocystis sp. (strain ATCC 27184 / PCC 6803 / Kazusa).